A 545-amino-acid chain; its full sequence is MENYRLILFSALVLVLFLMWDAWQTDYGPIPLLPPPPQPTASSGESSPVLPEAVPDAPPPEMADMDTAPILTGQKTIEVKTDLLAIKIGMASGDLYEVQLLNYPVSLKKPNEPVTLLHKRDPDLFVTQSGLRAASGPSITHETVQFSAPKTYYELIEDESSLKVPLTWEDENGIKVTKTYIFQRDSYQIDLNIKIENGTDQAWMGRAYAQFSRTPPESGGMFARSYVGAVFSTQEQEYQKVDFGDLASQSFDRRSSGGWVAMIQHYFVAAWVPREQGTNYYYGKHVQNSRYIAGVMPPQQTIAPGESGQFNLALFTGPKIQDQLAAVAPKLNLTVDYGKLTILAEPLFWLMSWFHNLVGNWGWAIVLLTFVVKLVFFKLSQTSYRSMARMRKLQPRLLALKERYGDDRQKVGQAMMELYRKEKVNPMGGCLPIVVQIPVFIALYWMLLESVELRQAPFIFWIQDLTSKDPYYILPLLMGVSMFVQQKLSPAPTDPIQAKVMALMPVMFTVFFVMFPAGLVLYWVVNNILSIAQQWYITRQIEQEG.

Residues 6-26 (LILFSALVLVLFLMWDAWQTD) form a helical membrane-spanning segment. Residues 34-59 (PPPPQPTASSGESSPVLPEAVPDAPP) are disordered. 3 consecutive transmembrane segments (helical) span residues 357–377 (LVGN…LVFF), 428–448 (GGCL…WMLL), and 505–525 (PVMF…YWVV).

Belongs to the OXA1/ALB3/YidC family. Type 1 subfamily. In terms of assembly, interacts with the Sec translocase complex via SecD. Specifically interacts with transmembrane segments of nascent integral membrane proteins during membrane integration.

The protein resides in the cell inner membrane. In terms of biological role, required for the insertion and/or proper folding and/or complex formation of integral membrane proteins into the membrane. Involved in integration of membrane proteins that insert both dependently and independently of the Sec translocase complex, as well as at least some lipoproteins. Aids folding of multispanning membrane proteins. The protein is Membrane protein insertase YidC of Nitrosococcus oceani (strain ATCC 19707 / BCRC 17464 / JCM 30415 / NCIMB 11848 / C-107).